Here is a 245-residue protein sequence, read N- to C-terminus: Transmembrane and ubiquitin-like domain-containing protein 1 (245 aa).

The tract at residues 2–30 is required to release iHOPS from membranes; the sequence is ALIEGVGDEVTVLFAVLACLLVLALAWVS. A helical membrane pass occupies residues 11–31; it reads VTVLFAVLACLLVLALAWVST. A disordered region spans residues 33-100; the sequence is TTESTDPQPQ…ASTPPDSPQE (68 aa). 3 positions are modified to phosphoserine: S73, S97, and S126. The 74-residue stretch at 102–175 folds into the Ubiquitin-like domain; that stretch reads LLLRLKFLND…LHCHVSTRVG (74 aa). Transmembrane regions (helical) follow at residues 194–214 and 219–239; these read IGSL…YCQI and FFPL…SLLA.

As to quaternary structure, interacts with EEF1A1, CAMLG, GRIA2 and GRIP1. Interacts with NPM1 and CDKN2A; TMUB1 can enhance interaction between NPM1 and CDKN2A and is proposed to bridge the proteins; proposed to be mediated by iHOPS. Interacts with TUBG1. Interacts with ERLIN2 and AMFR; TMUB1 promotes the interaction of ERLIN2 with AMFR. Isoform 1 (lHOPS) is processed by regulated intramembrane proteolysis (RIP) in the N-terminus to release iHOPS from membranes. Post-translationally, isoform 2 seems to undergo a selective cleavage in the C-terminal region to release an additional cytoplasmic form. As to expression, expressed in adult brain; at protein level. Isoform 1 (lHOPS) is highly expressed in small intestine, stomach and epididymis. Isoform 2 (sHOPS) and iHOPS are abundantly expressed in brain, liver and adrenal gland.

The protein localises to the membrane. It is found in the postsynaptic cell membrane. Its subcellular location is the recycling endosome. It localises to the cytoplasm. The protein resides in the nucleus. The protein localises to the nucleolus. It is found in the cytoskeleton. Its subcellular location is the microtubule organizing center. It localises to the centrosome. Its function is as follows. Involved in sterol-regulated ubiquitination and degradation of HMG-CoA reductase HMGCR. Involved in positive regulation of AMPA-selective glutamate receptor GRIA2 recycling to the cell surface. Acts as a negative regulator of hepatocyte growth during regeneration. May contribute to the regulation of translation during cell-cycle progression. May contribute to the regulation of cell proliferation. May be involved in centrosome assembly. Modulates stabilization and nucleolar localization of tumor suppressor CDKN2A and enhances association between CDKN2A and NPM1. This Mus musculus (Mouse) protein is Transmembrane and ubiquitin-like domain-containing protein 1 (Tmub1).